The following is a 94-amino-acid chain: Co-chaperonin GroES (94 aa).

This sequence belongs to the GroES chaperonin family. In terms of assembly, heptamer of 7 subunits arranged in a ring. Interacts with the chaperonin GroEL.

The protein localises to the cytoplasm. In terms of biological role, together with the chaperonin GroEL, plays an essential role in assisting protein folding. The GroEL-GroES system forms a nano-cage that allows encapsulation of the non-native substrate proteins and provides a physical environment optimized to promote and accelerate protein folding. GroES binds to the apical surface of the GroEL ring, thereby capping the opening of the GroEL channel. The sequence is that of Co-chaperonin GroES from Enterococcus faecalis (strain ATCC 700802 / V583).